The primary structure comprises 141 residues: MSEVFPKIGRRRARILAFQALFAWDAAGITPETLTQFTWLRRNPPPSTQDLGFSRLLFLGTLEHLREIDGCVSSRLEHWDFVRLNKVDKAILRLSAYSLLFQKDIPPVVVIHEAVSIARDFGTDDSFRFVNGVLDNIAKSA.

The protein belongs to the NusB family.

Functionally, involved in transcription antitermination. Required for transcription of ribosomal RNA (rRNA) genes. Binds specifically to the boxA antiterminator sequence of the ribosomal RNA (rrn) operons. The protein is Transcription antitermination protein NusB of Treponema pallidum (strain Nichols).